Reading from the N-terminus, the 175-residue chain is uncharacterized protein (175 aa).

Disordered regions lie at residues 1-32 and 156-175; these read MSHKDFNGLQAPQLLSSSSPVAKKQSSHKLRH and KQKQAKRAANTRQRTYKYRQ. Over residues 14–24 the composition is skewed to low complexity; that stretch reads LLSSSSPVAKK.

This is an uncharacterized protein from Mycoplasma pneumoniae (strain ATCC 29342 / M129 / Subtype 1) (Mycoplasmoides pneumoniae).